Consider the following 522-residue polypeptide: Monogalactosyldiacylglycerol synthase, chloroplastic (522 aa).

The N-terminal 98 residues, 1 to 98 (MSHPSTVTSE…RIPLGFSSIG (98 aa)), are a transit peptide targeting the chloroplast.

The protein belongs to the glycosyltransferase 28 family. In terms of assembly, homodimer. Zn(2+) is required as a cofactor.

Its subcellular location is the plastid. The protein localises to the chloroplast inner membrane. The enzyme catalyses a 1,2-diacyl-sn-glycerol + UDP-alpha-D-galactose = a 1,2-diacyl-3-O-(beta-D-galactosyl)-sn-glycerol + UDP + H(+). With respect to regulation, inhibited by ortho-phenanthroline and UDP (competitive inhibitor relatively to UDP-Gal only) and inactivated by citraconic anhydride, tert-butoxycarbonyl-L-methionine hydrosuccinimidyl ester (SLR) and N-ethylmaleimide (NEM). In terms of biological role, involved in the synthesis of the major structural component of photosynthetic membranes. The 1,2-diacylglycerol substrate preference is 18:2/18:2 &gt; 18:0/18:1 &gt; 18:1/18:1 &gt; 18:1/16:0 &gt; 16:0/18:2 &gt; 18:3/18:3 &gt; 16:0/18:1 &gt; 16:0/16:0 &gt; 18:0/18:0. This is Monogalactosyldiacylglycerol synthase, chloroplastic (MGD A) from Spinacia oleracea (Spinach).